Consider the following 102-residue polypeptide: ATP-dependent Clp protease adapter protein ClpS (102 aa).

This sequence belongs to the ClpS family. As to quaternary structure, binds to the N-terminal domain of the chaperone ClpA.

Involved in the modulation of the specificity of the ClpAP-mediated ATP-dependent protein degradation. The sequence is that of ATP-dependent Clp protease adapter protein ClpS from Aromatoleum aromaticum (strain DSM 19018 / LMG 30748 / EbN1) (Azoarcus sp. (strain EbN1)).